The following is a 472-amino-acid chain: Methylenetetrahydrofolate--tRNA-(uracil-5-)-methyltransferase TrmFO (472 aa).

G15–G20 provides a ligand contact to FAD.

This sequence belongs to the MnmG family. TrmFO subfamily. It depends on FAD as a cofactor.

The protein localises to the cytoplasm. It carries out the reaction uridine(54) in tRNA + (6R)-5,10-methylene-5,6,7,8-tetrahydrofolate + NADH + H(+) = 5-methyluridine(54) in tRNA + (6S)-5,6,7,8-tetrahydrofolate + NAD(+). The enzyme catalyses uridine(54) in tRNA + (6R)-5,10-methylene-5,6,7,8-tetrahydrofolate + NADPH + H(+) = 5-methyluridine(54) in tRNA + (6S)-5,6,7,8-tetrahydrofolate + NADP(+). Catalyzes the folate-dependent formation of 5-methyl-uridine at position 54 (M-5-U54) in all tRNAs. In Rhizobium meliloti (strain 1021) (Ensifer meliloti), this protein is Methylenetetrahydrofolate--tRNA-(uracil-5-)-methyltransferase TrmFO.